Consider the following 215-residue polypeptide: Large ribosomal subunit protein bL25 (215 aa).

The segment covering 192–203 has biased composition (acidic residues); the sequence is EEATEEEEEAAE. The interval 192-215 is disordered; sequence EEATEEEEEAAEPEVIKRKEEEEE. Basic and acidic residues predominate over residues 205 to 215; that stretch reads EVIKRKEEEEE.

This sequence belongs to the bacterial ribosomal protein bL25 family. CTC subfamily. In terms of assembly, part of the 50S ribosomal subunit; part of the 5S rRNA/L5/L18/L25 subcomplex. Contacts the 5S rRNA. Binds to the 5S rRNA independently of L5 and L18.

Functionally, this is one of the proteins that binds to the 5S RNA in the ribosome where it forms part of the central protuberance. The polypeptide is Large ribosomal subunit protein bL25 (Thermotoga sp. (strain RQ2)).